The following is a 250-amino-acid chain: Uracil-DNA glycosylase (250 aa).

Catalysis depends on D91, which acts as the Proton acceptor.

Belongs to the uracil-DNA glycosylase (UDG) superfamily. UNG family.

It localises to the host nucleus. It carries out the reaction Hydrolyzes single-stranded DNA or mismatched double-stranded DNA and polynucleotides, releasing free uracil.. Excises uracil residues from the DNA which can arise as a result of misincorporation of dUMP residues by DNA polymerase or due to deamination of cytosine. Functionally, excises uracil residues from the DNA which can arise as a result of misincorporation of dUMP residues by DNA polymerase or deamination of cytosines. Therefore may reduce deleterious uracil incorporation into the viral genome, particularly in terminally differentiated cells which lack DNA repair enzymes. This is Uracil-DNA glycosylase (UL114) from Homo sapiens (Human).